Here is a 385-residue protein sequence, read N- to C-terminus: Mannitol-1-phosphate 5-dehydrogenase (385 aa).

An NAD(+)-binding site is contributed by 3–14 (ALQFGAGNIGRG).

Belongs to the mannitol dehydrogenase family.

The enzyme catalyses D-mannitol 1-phosphate + NAD(+) = beta-D-fructose 6-phosphate + NADH + H(+). This is Mannitol-1-phosphate 5-dehydrogenase from Buchnera aphidicola subsp. Acyrthosiphon pisum (strain 5A).